Reading from the N-terminus, the 239-residue chain is UDP-2,3-diacylglucosamine hydrolase (239 aa).

Mn(2+) contacts are provided by Asp-8, His-10, Asp-41, Asn-78, and His-113. Substrate is bound at residue 78 to 79; sequence NR. Residues Asp-121, Ser-159, Asn-163, Lys-166, and His-194 each coordinate substrate. Residues His-194 and His-196 each contribute to the Mn(2+) site.

This sequence belongs to the LpxH family. The cofactor is Mn(2+).

Its subcellular location is the cell inner membrane. It carries out the reaction UDP-2-N,3-O-bis[(3R)-3-hydroxytetradecanoyl]-alpha-D-glucosamine + H2O = 2-N,3-O-bis[(3R)-3-hydroxytetradecanoyl]-alpha-D-glucosaminyl 1-phosphate + UMP + 2 H(+). It functions in the pathway glycolipid biosynthesis; lipid IV(A) biosynthesis; lipid IV(A) from (3R)-3-hydroxytetradecanoyl-[acyl-carrier-protein] and UDP-N-acetyl-alpha-D-glucosamine: step 4/6. Its function is as follows. Hydrolyzes the pyrophosphate bond of UDP-2,3-diacylglucosamine to yield 2,3-diacylglucosamine 1-phosphate (lipid X) and UMP by catalyzing the attack of water at the alpha-P atom. Involved in the biosynthesis of lipid A, a phosphorylated glycolipid that anchors the lipopolysaccharide to the outer membrane of the cell. The protein is UDP-2,3-diacylglucosamine hydrolase of Shewanella sp. (strain MR-7).